Consider the following 310-residue polypeptide: Junctional adhesion molecule C (310 aa).

Positions 1-31 (MALRRPPRLRLCARLPDFFLLLLFRGCLIGA) are cleaved as a signal peptide. Topologically, residues 32-241 (VNLKSSNRTP…EQEMEVYDLN (210 aa)) are extracellular. An Ig-like V-type domain is found at 35 to 127 (KSSNRTPVVQ…VARNDRKEID (93 aa)). 2 cysteine pairs are disulfide-bonded: C53-C115 and C160-C219. N-linked (GlcNAc...) asparagine glycans are attached at residues N104 and N192. One can recognise an Ig-like C2-type domain in the interval 139–236 (PVTPVCRVPK…SARCEEQEME (98 aa)). The chain crosses the membrane as a helical span at residues 242 to 262 (IGGIIGGVLVVLAVLALITLG). Residues 263 to 310 (ICCAYRRGYFINNKQDGESYKNPGKPDGVNYIRTDEEGDFRHKSSFVI) lie on the Cytoplasmic side of the membrane. 2 S-palmitoyl cysteine lipidation sites follow: C264 and C265.

Belongs to the immunoglobulin superfamily. As to quaternary structure, interacts with ITGAM. Interacts with GORASP2. Proteolytically cleaved from endothelial cells surface into a soluble form by ADAM10 and ADAM17; the release of soluble JAM3 is increased by pro-inflammatory factors. In terms of processing, S-palmitoylated by ZDHHC7. S-palmitoylation promotes expression at tight junctions. Detected on round and elongated spermatids (at protein level). Highest expression in placenta, brain and kidney. Significant expression is detected on platelets. Expressed in intestinal mucosa cells. Expressed in the vascular endothelium. Found in serum (at protein level). Also detected in the synovial fluid of patients with rheumatoid arthritis, psoriatic arthritis or ostearthritis (at protein level).

Its subcellular location is the cell membrane. The protein resides in the cell junction. The protein localises to the desmosome. It localises to the tight junction. It is found in the secreted. Its function is as follows. Junctional adhesion protein that mediates heterotypic cell-cell interactions with its cognate receptor JAM2 to regulate different cellular processes. Plays a role in homing and mobilization of hematopoietic stem and progenitor cells within the bone marrow. At the surface of bone marrow stromal cells, it contributes to the retention of the hematopoietic stem and progenitor cells expressing JAM3. Plays a central role in leukocytes extravasation by facilitating transmigration through the endothelium. Plays a role in spermatogenesis where JAM2 and JAM3, which are respectively expressed by Sertoli and germ cells, mediate an interaction between both cell types and play an essential role in the anchorage of germ cells onto Sertoli cells and the assembly of cell polarity complexes during spermatid differentiation. Also functions as a counter-receptor for ITGAM, mediating leukocyte-platelet interactions and is involved in the regulation of transepithelial migration of polymorphonuclear neutrophils (PMN). Plays a role in angiogenesis. Plays a role in the regulation of cell migration. During myogenesis, it is involved in myocyte fusion. In terms of biological role, promotes chemotaxis of vascular endothelial cells and stimulates angiogenesis. This Homo sapiens (Human) protein is Junctional adhesion molecule C (JAM3).